Here is a 251-residue protein sequence, read N- to C-terminus: Methylthioribulose-1-phosphate dehydratase (251 aa).

The segment at 1 to 26 (MTSVCDATNEDKENGSESTESQDKEH) is disordered. A compositionally biased stretch (basic and acidic residues) spans 9-26 (NEDKENGSESTESQDKEH). Cysteine 100 provides a ligand contact to substrate. Zn(2+)-binding residues include histidine 118 and histidine 120. The Proton donor/acceptor role is filled by glutamate 142. Histidine 198 is a binding site for Zn(2+). Residues 232 to 251 (MDPSAPPIEENHYYDVQQSQ) are disordered.

The protein belongs to the aldolase class II family. MtnB subfamily. Zn(2+) serves as cofactor.

The protein localises to the cytoplasm. The catalysed reaction is 5-(methylsulfanyl)-D-ribulose 1-phosphate = 5-methylsulfanyl-2,3-dioxopentyl phosphate + H2O. It functions in the pathway amino-acid biosynthesis; L-methionine biosynthesis via salvage pathway; L-methionine from S-methyl-5-thio-alpha-D-ribose 1-phosphate: step 2/6. Catalyzes the dehydration of methylthioribulose-1-phosphate (MTRu-1-P) into 2,3-diketo-5-methylthiopentyl-1-phosphate (DK-MTP-1-P). Functions in the methionine salvage pathway. May play a role in apoptosis. The protein is Methylthioribulose-1-phosphate dehydratase of Salmo salar (Atlantic salmon).